A 299-amino-acid chain; its full sequence is Probable endonuclease 4 (299 aa).

His-69, His-110, Glu-145, Asp-179, His-182, His-214, Asp-227, His-229, and Glu-259 together coordinate Zn(2+).

This sequence belongs to the AP endonuclease 2 family. The cofactor is Zn(2+).

It catalyses the reaction Endonucleolytic cleavage to 5'-phosphooligonucleotide end-products.. In terms of biological role, endonuclease IV plays a role in DNA repair. It cleaves phosphodiester bonds at apurinic or apyrimidinic (AP) sites, generating a 3'-hydroxyl group and a 5'-terminal sugar phosphate. The polypeptide is Probable endonuclease 4 (Geobacillus kaustophilus (strain HTA426)).